Consider the following 121-residue polypeptide: Fluoride-specific ion channel FluC 1 (121 aa).

4 helical membrane passes run 3–23 (YLYIFVGGALGALIRFCLSML), 29–49 (IPLGTFVANLLGAFLMGSIGA), 67–87 (TGLLGALTTFSTFQFELVTLF), and 92–112 (FILFTIYGVTSYILGILSCYL). Na(+) contacts are provided by Gly71 and Thr74.

This sequence belongs to the fluoride channel Fluc/FEX (TC 1.A.43) family.

The protein localises to the cell membrane. The catalysed reaction is fluoride(in) = fluoride(out). With respect to regulation, na(+) is not transported, but it plays an essential structural role and its presence is essential for fluoride channel function. Functionally, fluoride-specific ion channel. Important for reducing fluoride concentration in the cell, thus reducing its toxicity. The polypeptide is Fluoride-specific ion channel FluC 1 (Staphylococcus epidermidis (strain ATCC 35984 / DSM 28319 / BCRC 17069 / CCUG 31568 / BM 3577 / RP62A)).